The sequence spans 291 residues: Nucleotide-binding protein Ccel_2290 (291 aa).

ATP is bound at residue 8–15; sequence GMSGAGKS. Residue 59 to 62 participates in GTP binding; it reads DIRG.

It belongs to the RapZ-like family.

Its function is as follows. Displays ATPase and GTPase activities. In Ruminiclostridium cellulolyticum (strain ATCC 35319 / DSM 5812 / JCM 6584 / H10) (Clostridium cellulolyticum), this protein is Nucleotide-binding protein Ccel_2290.